A 63-amino-acid polypeptide reads, in one-letter code: Sec-independent protein translocase protein TatA (63 aa).

Residues Met-1–Gly-21 form a helical membrane-spanning segment.

This sequence belongs to the TatA/E family. As to quaternary structure, forms a complex with TatC.

Its subcellular location is the cell membrane. Its function is as follows. Part of the twin-arginine translocation (Tat) system that transports large folded proteins containing a characteristic twin-arginine motif in their signal peptide across membranes. TatA could form the protein-conducting channel of the Tat system. The sequence is that of Sec-independent protein translocase protein TatA from Shouchella clausii (strain KSM-K16) (Alkalihalobacillus clausii).